The following is a 333-amino-acid chain: uncharacterized protein (333 aa).

This is an uncharacterized protein from Gallus gallus (Chicken).